Here is a 197-residue protein sequence, read N- to C-terminus: Zinc finger protein 581 (197 aa).

Residues 1-10 (MLVLPSPCPQ) show a composition bias toward pro residues. A disordered region spans residues 1–52 (MLVLPSPCPQPLAFSSVETMEGPPRRTCRSPEPGPSSSIGSPQASSPPRPNH). A compositionally biased stretch (low complexity) spans 35 to 44 (PSSSIGSPQA). C2H2-type zinc fingers lie at residues 87–109 (YSCP…SITH), 115–137 (FECD…HSIH), 145–167 (HGCP…SRVH), and 173–196 (FQCP…RWKH).

It is found in the nucleus. Its function is as follows. May be involved in transcriptional regulation. The chain is Zinc finger protein 581 (ZNF581) from Homo sapiens (Human).